A 344-amino-acid chain; its full sequence is L-rhamnose-proton symporter (344 aa).

10 helical membrane passes run 4–24 (AIIL…CFYA), 38–58 (WSIG…YLLL), 68–88 (FSIA…IGNI), 101–121 (MGIG…TPIL), 137–157 (TLLG…AGLL), 175–195 (LILA…MDAA), 207–227 (INSL…GAII), 259–279 (ILFS…YAWG), 290–310 (MSWM…GLLL), and 321–341 (VAVL…VGLG).

It belongs to the L-rhamnose transporter (TC 2.A.7.6) family.

It is found in the cell inner membrane. It catalyses the reaction L-rhamnopyranose(in) + H(+)(in) = L-rhamnopyranose(out) + H(+)(out). Functionally, uptake of L-rhamnose across the cytoplasmic membrane with the concomitant transport of protons into the cell (symport system). This is L-rhamnose-proton symporter from Yersinia pseudotuberculosis serotype O:1b (strain IP 31758).